A 235-amino-acid chain; its full sequence is MKFEPELESGKLIKRYKRFLADIKLEDNSERTIHCANTGAMTGCAEPDSTVFFSTSSNLKRKYPNSWELSVTENNHTICVNTLRANQLVVEAIQEQNIKELTEYDELKTEVKYGSENSRIDILLTGKSLPDCYIEVKSVTLLSESGQGFFPDAVTTRGQKHLRELSEMAQLGHKAVLFFAVLHSGIEKVSIAHHIDQQYHSLLIDAIENGVNILCYQAEMSSKEMKIVRKLPFSI.

This sequence belongs to the SfsA family.

The chain is Sugar fermentation stimulation protein homolog from Aliivibrio fischeri (strain MJ11) (Vibrio fischeri).